Here is a 425-residue protein sequence, read N- to C-terminus: Serine--tRNA ligase (425 aa).

230–232 (TAE) is an L-serine binding site. 261–263 (RSE) contacts ATP. Residue Glu284 coordinates L-serine. ATP is bound at residue 348-351 (EISS). Residue Ser384 coordinates L-serine.

Belongs to the class-II aminoacyl-tRNA synthetase family. Type-1 seryl-tRNA synthetase subfamily. As to quaternary structure, homodimer. The tRNA molecule binds across the dimer.

It is found in the cytoplasm. It carries out the reaction tRNA(Ser) + L-serine + ATP = L-seryl-tRNA(Ser) + AMP + diphosphate + H(+). It catalyses the reaction tRNA(Sec) + L-serine + ATP = L-seryl-tRNA(Sec) + AMP + diphosphate + H(+). The protein operates within aminoacyl-tRNA biosynthesis; selenocysteinyl-tRNA(Sec) biosynthesis; L-seryl-tRNA(Sec) from L-serine and tRNA(Sec): step 1/1. Functionally, catalyzes the attachment of serine to tRNA(Ser). Is also able to aminoacylate tRNA(Sec) with serine, to form the misacylated tRNA L-seryl-tRNA(Sec), which will be further converted into selenocysteinyl-tRNA(Sec). The sequence is that of Serine--tRNA ligase from Streptococcus equi subsp. zooepidemicus (strain H70).